The sequence spans 92 residues: Transcription factor ILI6 (92 aa).

A disordered region spans residues 1–20 (MSSRRSRSRQSGSSRITDEQ). The 55-residue stretch at 5 to 59 (RSRSRQSGSSRITDEQISDLVSKLQDLLPEARLRSNDRVPSSRVLQETCNYIRSL) folds into the bHLH domain.

This sequence belongs to the bHLH protein family. As to quaternary structure, interacts with APG.

The protein resides in the nucleus. Atypical and probable non DNA-binding bHLH transcription factor that acts as a positive regulator of grain size. Binds the transcription repressor APG and forms a heterodimer of antagonistic bHLH transcription factors that regulates grain length and weight by controlling cell elongation in lemma and palea. May be involved in the control of lamina inclination through brassinosteroid signaling pathway. The polypeptide is Transcription factor ILI6 (ILI6) (Oryza sativa subsp. indica (Rice)).